Consider the following 207-residue polypeptide: Large ribosomal subunit protein uL4 (207 aa).

Residues 44–78 (MRQGTHKTKNRAEVSGGGRKPWRQKGTGRARQGSI) form a disordered region.

This sequence belongs to the universal ribosomal protein uL4 family. Part of the 50S ribosomal subunit.

In terms of biological role, one of the primary rRNA binding proteins, this protein initially binds near the 5'-end of the 23S rRNA. It is important during the early stages of 50S assembly. It makes multiple contacts with different domains of the 23S rRNA in the assembled 50S subunit and ribosome. Functionally, this protein when expressed in E.coli represses the endogenous S10 operon; this may not occur in B.stearothermophilus however. Its function is as follows. Forms part of the polypeptide exit tunnel. This chain is Large ribosomal subunit protein uL4 (rplD), found in Geobacillus stearothermophilus (Bacillus stearothermophilus).